The chain runs to 232 residues: 2-C-methyl-D-erythritol 4-phosphate cytidylyltransferase (232 aa).

The protein belongs to the IspD/TarI cytidylyltransferase family. IspD subfamily.

The enzyme catalyses 2-C-methyl-D-erythritol 4-phosphate + CTP + H(+) = 4-CDP-2-C-methyl-D-erythritol + diphosphate. Its pathway is isoprenoid biosynthesis; isopentenyl diphosphate biosynthesis via DXP pathway; isopentenyl diphosphate from 1-deoxy-D-xylulose 5-phosphate: step 2/6. Catalyzes the formation of 4-diphosphocytidyl-2-C-methyl-D-erythritol from CTP and 2-C-methyl-D-erythritol 4-phosphate (MEP). The protein is 2-C-methyl-D-erythritol 4-phosphate cytidylyltransferase of Neorickettsia sennetsu (strain ATCC VR-367 / Miyayama) (Ehrlichia sennetsu).